A 148-amino-acid chain; its full sequence is Large ribosomal subunit protein uL15 (148 aa).

Positions 1–61 are disordered; the sequence is MELNELRPAV…GGQMPMQRRL (61 aa). Basic residues predominate over residues 30–39; the sequence is TATKGHKGQK.

The protein belongs to the universal ribosomal protein uL15 family. Part of the 50S ribosomal subunit.

In terms of biological role, binds to the 23S rRNA. In Geobacter sulfurreducens (strain ATCC 51573 / DSM 12127 / PCA), this protein is Large ribosomal subunit protein uL15.